A 137-amino-acid chain; its full sequence is uncharacterized protein (137 aa).

This is an uncharacterized protein from Saccharomyces cerevisiae (strain ATCC 204508 / S288c) (Baker's yeast).